The chain runs to 813 residues: Protein tramtrack, alpha isoform (813 aa).

A BTB domain is found at 33 to 98 (TDVTLAVEGQ…MYRGEVSVDQ (66 aa)). Disordered regions lie at residues 118–148 (EVNDDKPSPAAAAAGAGATGSESTATTPQLQ), 171–324 (ANAG…GPSE), 356–428 (TTPA…MPKK), and 526–585 (AGLP…LDDQ). A compositionally biased stretch (low complexity) spans 125–145 (SPAAAAAGAGATGSESTATTP). Residues 176–187 (TPTLPVQPSLLS) are compositionally biased toward polar residues. The segment covering 192 to 201 (PKRKRGRPRK) has biased composition (basic residues). Ser-203, Ser-205, and Ser-206 each carry phosphoserine. Residue Thr-209 is modified to Phosphothreonine. Over residues 254–285 (HTDDLNESRDSLPSKRSKNSKDHRVVSHHEDN) the composition is skewed to basic and acidic residues. Composition is skewed to polar residues over residues 302 to 324 (LFGSSSTTISATAPGGSSTGPSE), 356 to 369 (TTPAQQGSPQTPTK), and 377 to 388 (ATGSNNSNSLLK). Residues 560–578 (SGKKGAKRPIQRRRVRRKA) are compositionally biased toward basic residues. 2 consecutive C2H2-type zinc fingers follow at residues 610–638 (YRCTECAKENMQKTFKNKYSFQRHAFLYH) and 646–669 (FPCPVCSKEFSRPDKMKNHLKMTH). Phosphoserine is present on Ser-682.

In terms of assembly, interacts with CoRest/CG33525, suggesting that it acts by recruiting a CoRest-containing corepressor complex. Interacts with phyl.

The protein localises to the nucleus. Functionally, binds to a number of sites in the transcriptional regulatory region of ftz. Isoform alpha is required to repress genes that promote the R7 cell fate. Probable repressor of the transcription of the segmentation genes ftz, eve, h, odd, run, and en. May bind to the region 5'-AGGG[CT]GG-3'. Degradation of ttk is directed by binding of sinah or sina, via the adapter molecule phyl which binds to the BTB domain of ttk. The protein is Protein tramtrack, alpha isoform (ttk) of Drosophila melanogaster (Fruit fly).